The chain runs to 365 residues: MSLTRLHIETFRNISLAQLDPGDGLNLIYGQNGSGKTSILEAIYFLGMGRSFRSHLSQRVIQHNDDKLTLFANLSVCEQESKIGLRRFRNGETEVKINGDNIKRLSTLAETLPIQVITPESFSLLFEGPKSRRQFIDWGAFHSDKSFHLAWANVRRILKQRNQLLKNQVSYSQIQYWDKELVRYSEQVTEIRKQYVDSLNEQLKGIIGEFLPLVEVKVSFTRGWDSKTDFGQLLETQYLRDVAAGNTGSGPHKADLRLRVGVLPVQDALSRGQLKLLVCALRIAQGKLLKQQTDKNSIYLVDDLPSELDAQHRKLLLQQLMDTGAQVFVTAIEPAAIVDSLATPPSKMFHVEQGCVTVIDKPTRE.

Glycine 30–threonine 37 serves as a coordination point for ATP.

Belongs to the RecF family.

Its subcellular location is the cytoplasm. Functionally, the RecF protein is involved in DNA metabolism; it is required for DNA replication and normal SOS inducibility. RecF binds preferentially to single-stranded, linear DNA. It also seems to bind ATP. The polypeptide is DNA replication and repair protein RecF (Shewanella halifaxensis (strain HAW-EB4)).